A 124-amino-acid polypeptide reads, in one-letter code: MNVLLIFLGCGAGGVARYGVSNLMYLLMGKQFPIGTLIVNITGSLLMGILFIFILERLSGNIQLWRSLLLIGFLGGYTTFSSFSIETFNLIEAGHYFGAALNVLLSVALCIAGAWLGVLIGRQL.

4 consecutive transmembrane segments (helical) span residues V3–L23, I34–I54, L68–F88, and A100–I120. Positions 75 and 78 each coordinate Na(+).

Belongs to the fluoride channel Fluc/FEX (TC 1.A.43) family.

Its subcellular location is the cell inner membrane. It catalyses the reaction fluoride(in) = fluoride(out). Na(+) is not transported, but it plays an essential structural role and its presence is essential for fluoride channel function. Functionally, fluoride-specific ion channel. Important for reducing fluoride concentration in the cell, thus reducing its toxicity. The polypeptide is Fluoride-specific ion channel FluC (Coxiella burnetii (strain Dugway 5J108-111)).